Here is an 873-residue protein sequence, read N- to C-terminus: F-box only protein 41 (873 aa).

Over residues 85-97 (ESTSFQGKEQATG) the composition is skewed to polar residues. Disordered regions lie at residues 85-110 (ESTS…HHHH), 163-193 (SSAC…SPAD), and 345-540 (SSSC…PSRS). A compositionally biased stretch (pro residues) spans 168–178 (TPPPGPGPGPC). A compositionally biased stretch (low complexity) spans 179–192 (SGPSSASPASPSPA). Residues 207–349 (ALEKLEVDRR…QLQVISSSCG (143 aa)) are a coiled coil. Positions 357–371 (GRGGGGSASGPGVRG) are enriched in gly residues. R358 bears the Omega-N-methylarginine mark. Polar residues-rich tracts occupy residues 384 to 414 (VPST…SSGC) and 442 to 456 (AQAT…QAPR). Phosphoserine is present on S476. Residue T477 is modified to Phosphothreonine. An F-box domain is found at 548 to 592 (ILKMRAALFCIFTYLDTRTLLHAAEVCRDWRFVARHPAVWTRVLL). A Phosphoserine modification is found at S760.

Directly interacts with SKP1 and CUL1.

Functionally, substrate-recognition component of the SCF (SKP1-CUL1-F-box protein)-type E3 ubiquitin ligase complex. In Mus musculus (Mouse), this protein is F-box only protein 41 (Fbxo41).